We begin with the raw amino-acid sequence, 389 residues long: MDLFEYQARDMFEAHGVPVLAGIVANTAEEAKAAAEKIGGVTVVKAQVKVGGRGKAGGVKVAKTADEAFEYAGNILGMDIKGHTVHKVMIAQGADIAEEYYFSVLLDRANRNYLAMCSVEGGVEIEVLAVERPEALARIAVDPAVGIDQAKAEEIVDAAGFAADVLDGVIETIKKLWDVFQKEDATLVEVNPLVKTGDGRILALDGKVTLDANADFRHPDHEALEDKDSADPLEAKAKENDLNYVKLDGEVGIIGNGAGLVMSTLDVVAYAGESHGNVKPANFLDIGGGASAEVMAAGLDVILNDAQVKSVFVNVFGGITACDAVANGIVKALEILGTSANKPLVVRLDGNNVEEGRRILTEANHPLVTQAATMDEGADKAAELAHAAK.

In terms of domain architecture, ATP-grasp spans 9–236 (RDMFEAHGVP…KDSADPLEAK (228 aa)). ATP contacts are provided by residues K45, 52-54 (GRG), A94, and E99. The Mg(2+) site is built by N191 and D205. Substrate is bound by residues N256 and 318–320 (GIT).

The protein belongs to the succinate/malate CoA ligase beta subunit family. In terms of assembly, heterotetramer of two alpha and two beta subunits. It depends on Mg(2+) as a cofactor.

The catalysed reaction is succinate + ATP + CoA = succinyl-CoA + ADP + phosphate. It catalyses the reaction GTP + succinate + CoA = succinyl-CoA + GDP + phosphate. It participates in carbohydrate metabolism; tricarboxylic acid cycle; succinate from succinyl-CoA (ligase route): step 1/1. In terms of biological role, succinyl-CoA synthetase functions in the citric acid cycle (TCA), coupling the hydrolysis of succinyl-CoA to the synthesis of either ATP or GTP and thus represents the only step of substrate-level phosphorylation in the TCA. The beta subunit provides nucleotide specificity of the enzyme and binds the substrate succinate, while the binding sites for coenzyme A and phosphate are found in the alpha subunit. This is Succinate--CoA ligase [ADP-forming] subunit beta from Renibacterium salmoninarum (strain ATCC 33209 / DSM 20767 / JCM 11484 / NBRC 15589 / NCIMB 2235).